The following is a 224-amino-acid chain: ATP synthase subunit b (224 aa).

Residues 2–22 traverse the membrane as a helical segment; sequence TPSLGLIFWQSVIFLISFIIL.

Belongs to the ATPase B chain family. As to quaternary structure, F-type ATPases have 2 components, F(1) - the catalytic core - and F(0) - the membrane proton channel. F(1) has five subunits: alpha(3), beta(3), gamma(1), delta(1), epsilon(1). F(0) has three main subunits: a(1), b(2) and c(10-14). The alpha and beta chains form an alternating ring which encloses part of the gamma chain. F(1) is attached to F(0) by a central stalk formed by the gamma and epsilon chains, while a peripheral stalk is formed by the delta and b chains.

The protein localises to the cell membrane. In terms of biological role, f(1)F(0) ATP synthase produces ATP from ADP in the presence of a proton or sodium gradient. F-type ATPases consist of two structural domains, F(1) containing the extramembraneous catalytic core and F(0) containing the membrane proton channel, linked together by a central stalk and a peripheral stalk. During catalysis, ATP synthesis in the catalytic domain of F(1) is coupled via a rotary mechanism of the central stalk subunits to proton translocation. Its function is as follows. Component of the F(0) channel, it forms part of the peripheral stalk, linking F(1) to F(0). The polypeptide is ATP synthase subunit b (Karelsulcia muelleri (strain GWSS) (Sulcia muelleri)).